Consider the following 319-residue polypeptide: Protease HtpX homolog (319 aa).

The next 2 helical transmembrane spans lie at 6–26 (TAMLLAFMTVLFMAVGYVIGG) and 28–48 (GGMMIALVIAAGMNFFSYWNS). Residue H130 coordinates Zn(2+). The active site involves E131. A Zn(2+)-binding site is contributed by H134. Helical transmembrane passes span 145-165 (LTATLAGAISMLGNFAFFFGG) and 172-192 (PLGFIGVLIAMIVAPLAAMLV). E201 provides a ligand contact to Zn(2+). The interval 277–319 (MARETSTGSTAPVRPDNAGRKSRSVPRTGWGRGGSEPPKGPWS) is disordered.

This sequence belongs to the peptidase M48B family. The cofactor is Zn(2+).

It is found in the cell inner membrane. The polypeptide is Protease HtpX homolog (Rhizobium meliloti (strain 1021) (Ensifer meliloti)).